We begin with the raw amino-acid sequence, 144 residues long: Bacilliredoxin BLi02323/BL05224 (144 aa).

Belongs to the bacilliredoxin family.

The polypeptide is Bacilliredoxin BLi02323/BL05224 (Bacillus licheniformis (strain ATCC 14580 / DSM 13 / JCM 2505 / CCUG 7422 / NBRC 12200 / NCIMB 9375 / NCTC 10341 / NRRL NRS-1264 / Gibson 46)).